The following is a 336-amino-acid chain: GTPase Obg (336 aa).

The Obg domain maps to 1–159; that stretch reads MKFLDETKVY…KTIWLRLKLI (159 aa). The OBG-type G domain occupies 160–327; that stretch reads ADAGLVGLPN…ALRALRSVIA (168 aa). Residues 166–173, 191–195, 212–215, 279–282, and 308–310 contribute to the GTP site; these read GLPNAGKS, FTTLH, DIPG, SQID, and SAV. Residues serine 173 and threonine 193 each coordinate Mg(2+).

It belongs to the TRAFAC class OBG-HflX-like GTPase superfamily. OBG GTPase family. In terms of assembly, monomer. The cofactor is Mg(2+).

The protein resides in the cytoplasm. Its function is as follows. An essential GTPase which binds GTP, GDP and possibly (p)ppGpp with moderate affinity, with high nucleotide exchange rates and a fairly low GTP hydrolysis rate. Plays a role in control of the cell cycle, stress response, ribosome biogenesis and in those bacteria that undergo differentiation, in morphogenesis control. The sequence is that of GTPase Obg from Rhizobium meliloti (strain 1021) (Ensifer meliloti).